Here is a 320-residue protein sequence, read N- to C-terminus: MALLDEVKSELSNIDGGSPAVQKAQVTSMLYFGRGFRKVQRESSTQIIVQPQFDSMEAAHWLQETIESLYKIPAALKSVDVKTPQGSMRRYAVDVGARAGFALAVRTGMIDPRLNRIVRGLPTDLSNGNIAQIKGVWRGAFMSAGVLSDPDKPSALEIICPNEETADSLIAMGQRLGIRAAKHTVRSSVRVHLSDPDAIERLLTMMGASSTVRDWTGKRPDTESHHRANRLANFDDANMRRSAKAAAEAVVKVQHAFDVLGDDIPQNLRAAGQLRIDHPDFSLEELGRAARPQISKDAVAGRIRRLLQRAEKAEQDAAMA.

The segment at residues 282 to 315 is a DNA-binding region (H-T-H motif); the sequence is SLEELGRAARPQISKDAVAGRIRRLLQRAEKAEQ.

The protein belongs to the WhiA family.

Functionally, involved in cell division and chromosome segregation. This Bifidobacterium animalis subsp. lactis (strain AD011) protein is Probable cell division protein WhiA.